Here is a 308-residue protein sequence, read N- to C-terminus: Ribosomal RNA small subunit methyltransferase H (308 aa).

Residues 36–38, Asp-55, Phe-82, Asp-103, and Gln-110 each bind S-adenosyl-L-methionine; that span reads GGH.

The protein belongs to the methyltransferase superfamily. RsmH family.

Its subcellular location is the cytoplasm. It catalyses the reaction cytidine(1402) in 16S rRNA + S-adenosyl-L-methionine = N(4)-methylcytidine(1402) in 16S rRNA + S-adenosyl-L-homocysteine + H(+). Functionally, specifically methylates the N4 position of cytidine in position 1402 (C1402) of 16S rRNA. The sequence is that of Ribosomal RNA small subunit methyltransferase H from Helicobacter pylori (strain J99 / ATCC 700824) (Campylobacter pylori J99).